Here is a 126-residue protein sequence, read N- to C-terminus: MHAIMLKAKLHRAEVTHAVLDYEGSCAIDGDWLDLSGIREYEQIQIYNVDNGERFTTYAIRAENGSKMISVNGAAAHKAKVGDRVIICAYAHYSEAELASHKPRMLYMAPGNQLSHTSEAIPIQVA.

Residue Ser-25 is the Schiff-base intermediate with substrate; via pyruvic acid of the active site. Position 25 is a pyruvic acid (Ser) (Ser-25). Position 57 (Thr-57) interacts with substrate. The active-site Proton donor is the Tyr-58. 73–75 (GAA) is a substrate binding site.

It belongs to the PanD family. As to quaternary structure, heterooctamer of four alpha and four beta subunits. It depends on pyruvate as a cofactor. Post-translationally, is synthesized initially as an inactive proenzyme, which is activated by self-cleavage at a specific serine bond to produce a beta-subunit with a hydroxyl group at its C-terminus and an alpha-subunit with a pyruvoyl group at its N-terminus.

It localises to the cytoplasm. The enzyme catalyses L-aspartate + H(+) = beta-alanine + CO2. It participates in cofactor biosynthesis; (R)-pantothenate biosynthesis; beta-alanine from L-aspartate: step 1/1. In terms of biological role, catalyzes the pyruvoyl-dependent decarboxylation of aspartate to produce beta-alanine. This chain is Aspartate 1-decarboxylase, found in Pseudomonas aeruginosa (strain LESB58).